A 281-amino-acid polypeptide reads, in one-letter code: Phytanoyl-CoA dioxygenase domain-containing protein 1 homolog (281 aa).

Residues Lys-95, Met-134, 149 to 151, and Trp-166 contribute to the 2-oxoglutarate site; that span reads HQD. Residues His-149 and Asp-151 each coordinate Fe cation. A Fe cation-binding site is contributed by His-239. Positions 241 and 250 each coordinate 2-oxoglutarate.

It belongs to the PhyH family. PHYHD1 subfamily. It depends on Fe cation as a cofactor.

Functionally, has alpha-ketoglutarate-dependent dioxygenase activity. Does not show detectable activity towards fatty acid CoA thioesters. Is not expected to be active with phytanoyl CoA. This Dictyostelium discoideum (Social amoeba) protein is Phytanoyl-CoA dioxygenase domain-containing protein 1 homolog (phyhd1).